The primary structure comprises 457 residues: Squalene epoxidase erg1 (457 aa).

FAD-binding positions include I15–T16, E35–R36, R43, R114, V130, D293, and M306. Transmembrane regions (helical) follow at residues G347–T364, F409–M429, and I433–S453.

The protein belongs to the squalene monooxygenase family. Requires FAD as cofactor.

The protein localises to the microsome membrane. Its subcellular location is the endoplasmic reticulum membrane. It localises to the vacuole membrane. It carries out the reaction squalene + reduced [NADPH--hemoprotein reductase] + O2 = (S)-2,3-epoxysqualene + oxidized [NADPH--hemoprotein reductase] + H2O + H(+). The protein operates within terpene metabolism; lanosterol biosynthesis; lanosterol from farnesyl diphosphate: step 2/3. Its pathway is steroid metabolism; ergosterol biosynthesis. With respect to regulation, activity is blocked by the allylamine class antifungal terbinafine. In terms of biological role, squalene epoxidase; part of the third module of ergosterol biosynthesis pathway that includes by the late steps of the pathway. Erg1 catalyzes the epoxidation of squalene into 2,3-epoxysqualene. The third module or late pathway involves the ergosterol synthesis itself through consecutive reactions that mainly occur in the endoplasmic reticulum (ER) membrane. Firstly, the squalene synthase erg9 catalyzes the condensation of 2 farnesyl pyrophosphate moieties to form squalene, which is the precursor of all steroids. Secondly, squalene is converted into lanosterol by the consecutive action of the squalene epoxidase erg1 and the lanosterol synthase erg7. The lanosterol 14-alpha-demethylase erg11/cyp1 catalyzes C14-demethylation of lanosterol to produce 4,4'-dimethyl cholesta-8,14,24-triene-3-beta-ol. In the next steps, a complex process involving various demethylation, reduction and desaturation reactions catalyzed by the C-14 reductase erg24 and the C-4 demethylation complex erg25-erg26-erg27 leads to the production of zymosterol. Erg28 likely functions in the C-4 demethylation complex reaction by tethering erg26 and Erg27 to the endoplasmic reticulum or to facilitate interaction between these proteins. Then, the sterol 24-C-methyltransferase erg6 catalyzes the methyl transfer from S-adenosyl-methionine to the C-24 of zymosterol to form fecosterol. The C-8 sterol isomerase erg2 catalyzes the reaction which results in unsaturation at C-7 in the B ring of sterols and thus converts fecosterol to episterol. The sterol-C5-desaturases erg31 and erg32 then catalyze the introduction of a C-5 double bond in the B ring to produce 5-dehydroepisterol. The C-22 sterol desaturase erg5 further converts 5-dehydroepisterol into ergosta-5,7,22,24(28)-tetraen-3beta-ol by forming the C-22(23) double bond in the sterol side chain. Finally, ergosta-5,7,22,24(28)-tetraen-3beta-ol is substrate of the C-24(28) sterol reductase erg4 to produce ergosterol. In the genus Schizosaccharomyces, a second route exists between lanosterol and fecosterol, via the methylation of lanosterol to eburicol by erg6, followed by C14-demethylation by erg11/cyp1 and C4-demethylation by the demethylation complex erg25-erg26-erg27. This chain is Squalene epoxidase erg1, found in Schizosaccharomyces pombe (strain 972 / ATCC 24843) (Fission yeast).